The sequence spans 382 residues: Sphingoid long-chain base transporter RSB1 (382 aa).

The Extracellular segment spans residues 1 to 34; that stretch reads MSNATNNTLGSLLPQLEAAANSNSLYGGMVPNLR. N-linked (GlcNAc...) asparagine glycans are attached at residues Asn-3 and Asn-6. Residues 35-55 form a helical membrane-spanning segment; sequence FNITMIVIWGILLTIHVVQLL. Over 56–57 the chain is Cytoplasmic; sequence MR. Residues 58–78 form a helical membrane-spanning segment; it reads QYWFSIAFICTGILEVLGYIG. The Extracellular portion of the chain corresponds to 79–90; sequence RTWSHSNVADMD. A helical transmembrane segment spans residues 91–111; it reads AFLLNMICLTIAPVFTMGGIY. Over 112 to 135 the chain is Cytoplasmic; sequence YQLAKLIEVYGHRFSLLPSPMAYS. Residues 136–156 form a helical membrane-spanning segment; sequence FIFICSDIVSLVVQAVGGGLC. Residues 157 to 171 are Extracellular-facing; the sequence is GVAVTDGTSTTTGNH. A helical transmembrane segment spans residues 172-192; that stretch reads VFIAGLAIQVASMAIFLMLWF. The Cytoplasmic segment spans residues 193-241; it reads HFLFRIYISVRWEHINSRPISLSLLKISQTEVDYLYREKFHFLRLEPKR. A helical transmembrane segment spans residues 242 to 262; sequence WVFHYFNLAMTVAVLTIFTRC. The Extracellular portion of the chain corresponds to 263-281; sequence CYRLAELVVGWDGYLITHE. Residues 282–302 form a helical membrane-spanning segment; sequence WYFIILDALMMAIATVTLTIF. At 303–382 the chain is on the cytoplasmic side; that stretch reads HPGFAFKGRS…LFSSKKKAKL (80 aa).

Belongs to the lipid-translocating exporter (LTE) (TC 9.A.26.1) family.

It localises to the cell membrane. Its function is as follows. Catalyzes the ATP-dependent translocation of sphingoid long-chain bases (LCBs) from the cytoplasmic site toward the extracytoplasmic side of the membrane (flip-flop). Involved in the establishment of the functional lipid asymmetry of the plasma membrane. Regulates intracellular levels of LCBs, sphingolipid precursors that are growth inhibitory at increased levels. In Saccharomyces cerevisiae (strain Lalvin EC1118 / Prise de mousse) (Baker's yeast), this protein is Sphingoid long-chain base transporter RSB1 (RSB1).